Consider the following 773-residue polypeptide: Acyl-homoserine lactone acylase PvdQ (773 aa).

A signal peptide spans 1 to 23 (MSRALPGFLFAGLSVAVVLPAQA). A propeptide spans 200-221 (SQQVQALQLAAARNERFALERG) (spacer peptide). S222 serves as the catalytic Nucleophile.

Belongs to the peptidase S45 family. In terms of assembly, heterodimer of an alpha subunit and a beta subunit processed from the same precursor.

The protein localises to the periplasm. The catalysed reaction is an N-acyl-L-homoserine lactone + H2O = L-homoserine lactone + a carboxylate. Functionally, catalyzes the deacylation of acyl-homoserine lactone (AHL or acyl-HSL), releasing homoserine lactone (HSL) and the corresponding fatty acid. Possesses a specificity for the degradation of long-chain acyl-HSLs (side chains of 11 to 14 carbons in length). This Pseudomonas syringae pv. tomato (strain ATCC BAA-871 / DC3000) protein is Acyl-homoserine lactone acylase PvdQ (pvdQ).